The chain runs to 397 residues: Succinate--CoA ligase [ADP-forming] subunit beta (397 aa).

The region spanning 9–253 (KEILASYGVR…IREENPIEVE (245 aa)) is the ATP-grasp domain. Residues Lys50, 57–59 (GRG), Val106, and Glu116 each bind ATP. Positions 208 and 222 each coordinate Mg(2+). Substrate-binding positions include Asn273 and 330 to 332 (GIV).

The protein belongs to the succinate/malate CoA ligase beta subunit family. As to quaternary structure, heterotetramer of two alpha and two beta subunits. The cofactor is Mg(2+).

It carries out the reaction succinate + ATP + CoA = succinyl-CoA + ADP + phosphate. The catalysed reaction is GTP + succinate + CoA = succinyl-CoA + GDP + phosphate. The protein operates within carbohydrate metabolism; tricarboxylic acid cycle; succinate from succinyl-CoA (ligase route): step 1/1. Succinyl-CoA synthetase functions in the citric acid cycle (TCA), coupling the hydrolysis of succinyl-CoA to the synthesis of either ATP or GTP and thus represents the only step of substrate-level phosphorylation in the TCA. The beta subunit provides nucleotide specificity of the enzyme and binds the substrate succinate, while the binding sites for coenzyme A and phosphate are found in the alpha subunit. In Flavobacterium johnsoniae (strain ATCC 17061 / DSM 2064 / JCM 8514 / BCRC 14874 / CCUG 350202 / NBRC 14942 / NCIMB 11054 / UW101) (Cytophaga johnsonae), this protein is Succinate--CoA ligase [ADP-forming] subunit beta.